The chain runs to 319 residues: Acetyl-coenzyme A carboxylase carboxyl transferase subunit alpha (319 aa).

In terms of domain architecture, CoA carboxyltransferase C-terminal spans 35–296; sequence NIDEEVHRLR…KTQLLADLAD (262 aa).

Belongs to the AccA family. Acetyl-CoA carboxylase is a heterohexamer composed of biotin carboxyl carrier protein (AccB), biotin carboxylase (AccC) and two subunits each of ACCase subunit alpha (AccA) and ACCase subunit beta (AccD).

It localises to the cytoplasm. The enzyme catalyses N(6)-carboxybiotinyl-L-lysyl-[protein] + acetyl-CoA = N(6)-biotinyl-L-lysyl-[protein] + malonyl-CoA. It functions in the pathway lipid metabolism; malonyl-CoA biosynthesis; malonyl-CoA from acetyl-CoA: step 1/1. Functionally, component of the acetyl coenzyme A carboxylase (ACC) complex. First, biotin carboxylase catalyzes the carboxylation of biotin on its carrier protein (BCCP) and then the CO(2) group is transferred by the carboxyltransferase to acetyl-CoA to form malonyl-CoA. The polypeptide is Acetyl-coenzyme A carboxylase carboxyl transferase subunit alpha (Cronobacter sakazakii (strain ATCC BAA-894) (Enterobacter sakazakii)).